The primary structure comprises 540 residues: Berberine bridge enzyme-like 16 (540 aa).

Residues 1–24 (MKFWSRPLTFLIIIIYLIIQQVNS) form the signal peptide. A disulfide bridge links Cys38 with Cys101. A glycan (N-linked (GlcNAc...) asparagine) is linked at Asn59. In terms of domain architecture, FAD-binding PCMH-type spans 79–254 (STRKPEVIVA…LAWKIKLVRV (176 aa)). Residues 116 to 178 (HDYEGFSYTS…KVHAFPAGVC (63 aa)) constitute a cross-link (6-(S-cysteinyl)-8alpha-(pros-histidyl)-FAD (His-Cys)). 2 N-linked (GlcNAc...) asparagine glycosylation sites follow: Asn325 and Asn496.

The protein belongs to the oxygen-dependent FAD-linked oxidoreductase family. The cofactor is FAD. The FAD cofactor is bound via a bicovalent 6-S-cysteinyl, 8alpha-N1-histidyl FAD linkage.

The protein resides in the secreted. It is found in the cell wall. This chain is Berberine bridge enzyme-like 16, found in Arabidopsis thaliana (Mouse-ear cress).